The sequence spans 101 residues: Citrate lyase acyl carrier protein (101 aa).

At serine 14 the chain carries O-(phosphoribosyl dephospho-coenzyme A)serine.

Belongs to the CitD family. As to quaternary structure, oligomer with a subunit composition of (alpha,beta,gamma)6.

The protein resides in the cytoplasm. Its function is as follows. Covalent carrier of the coenzyme of citrate lyase. The protein is Citrate lyase acyl carrier protein of Streptococcus uberis (strain ATCC BAA-854 / 0140J).